Consider the following 456-residue polypeptide: Coenzyme F420 hydrogenase subunit alpha (456 aa).

Residues cysteine 63, cysteine 66, cysteine 432, and cysteine 435 each coordinate Ni(2+).

This sequence belongs to the [NiFe]/[NiFeSe] hydrogenase large subunit family. In terms of assembly, pentamer of two alpha chains, two beta chains and a gamma chain. It depends on Ni(2+) as a cofactor. Iron-sulfur cluster serves as cofactor. FAD is required as a cofactor.

It is found in the cell membrane. The catalysed reaction is oxidized coenzyme F420-(gamma-L-Glu)(n) + H2 + H(+) = reduced coenzyme F420-(gamma-L-Glu)(n). Functionally, reduces the physiological low-potential two-electron acceptor coenzyme F420, and the artificial one-electron acceptor methylviologen. The chain is Coenzyme F420 hydrogenase subunit alpha (frhA) from Methanosarcina barkeri (strain Fusaro / DSM 804).